The chain runs to 204 residues: Inactive ribonuclease-like protein 9 (204 aa).

The signal sequence occupies residues 1–26 (MMRTPITTHPLLLLLLLQQLLQPVQF). 3 disulfide bridges follow: C97-C152, C115-C167, and C122-C129. 2 N-linked (GlcNAc...) asparagine glycosylation sites follow: N130 and N142.

This sequence belongs to the pancreatic ribonuclease family.

It is found in the secreted. Functionally, does not exhibit any ribonuclease activity. This chain is Inactive ribonuclease-like protein 9 (RNASE9), found in Macaca nemestrina (Pig-tailed macaque).